The chain runs to 393 residues: Tryptophan synthase beta chain (393 aa).

N6-(pyridoxal phosphate)lysine is present on Lys85.

The protein belongs to the TrpB family. Tetramer of two alpha and two beta chains. Pyridoxal 5'-phosphate serves as cofactor.

It carries out the reaction (1S,2R)-1-C-(indol-3-yl)glycerol 3-phosphate + L-serine = D-glyceraldehyde 3-phosphate + L-tryptophan + H2O. The protein operates within amino-acid biosynthesis; L-tryptophan biosynthesis; L-tryptophan from chorismate: step 5/5. The beta subunit is responsible for the synthesis of L-tryptophan from indole and L-serine. The polypeptide is Tryptophan synthase beta chain (trpB) (Helicobacter pylori (strain J99 / ATCC 700824) (Campylobacter pylori J99)).